We begin with the raw amino-acid sequence, 447 residues long: GTPase Der (447 aa).

EngA-type G domains lie at 4-165 (KIIA…PEEE) and 180-357 (LQIV…KIWN). GTP is bound by residues 10 to 17 (GRPNVGKS), 57 to 61 (DTPGL), 119 to 122 (NKCE), 186 to 193 (GRPNAGKS), 233 to 237 (DTAGL), and 298 to 301 (NKWD). The region spanning 358–443 (KKIATSKLNE…PIRFTYVKTK (86 aa)) is the KH-like domain.

It belongs to the TRAFAC class TrmE-Era-EngA-EngB-Septin-like GTPase superfamily. EngA (Der) GTPase family. As to quaternary structure, associates with the 50S ribosomal subunit.

Its function is as follows. GTPase that plays an essential role in the late steps of ribosome biogenesis. This chain is GTPase Der, found in Rickettsia akari (strain Hartford).